Consider the following 223-residue polypeptide: RNA-free ribonuclease P (223 aa).

Belongs to the HARP family.

It catalyses the reaction Endonucleolytic cleavage of RNA, removing 5'-extranucleotides from tRNA precursor.. Functionally, RNA-free RNase P that catalyzes the removal of the 5'-leader sequence from pre-tRNA to produce the mature 5'-terminus. The chain is RNA-free ribonuclease P from Methanococcus maripaludis (strain DSM 14266 / JCM 13030 / NBRC 101832 / S2 / LL).